The primary structure comprises 88 residues: Exodeoxyribonuclease 7 small subunit (88 aa).

It belongs to the XseB family. As to quaternary structure, heterooligomer composed of large and small subunits.

The protein localises to the cytoplasm. It catalyses the reaction Exonucleolytic cleavage in either 5'- to 3'- or 3'- to 5'-direction to yield nucleoside 5'-phosphates.. In terms of biological role, bidirectionally degrades single-stranded DNA into large acid-insoluble oligonucleotides, which are then degraded further into small acid-soluble oligonucleotides. The sequence is that of Exodeoxyribonuclease 7 small subunit from Bordetella bronchiseptica (strain ATCC BAA-588 / NCTC 13252 / RB50) (Alcaligenes bronchisepticus).